We begin with the raw amino-acid sequence, 155 residues long: MSRRSEAPKRQILPDPKYKSDLLAKFINTVMKDGKKSVAERVLYGALTQIEGKKGDGIQVLEQALDNVRPRVEVKSRRVGGATYQVPVEVRPVRQNALAMRWIVDAARKRGEKSMALKLAGELMDAADSKGSAVKKREDTHRMAEANKAFSHYRW.

Belongs to the universal ribosomal protein uS7 family. In terms of assembly, part of the 30S ribosomal subunit. Contacts proteins S9 and S11.

Functionally, one of the primary rRNA binding proteins, it binds directly to 16S rRNA where it nucleates assembly of the head domain of the 30S subunit. Is located at the subunit interface close to the decoding center, probably blocks exit of the E-site tRNA. This chain is Small ribosomal subunit protein uS7, found in Thioalkalivibrio sulfidiphilus (strain HL-EbGR7).